A 161-amino-acid chain; its full sequence is Cyclic pyranopterin monophosphate synthase (161 aa).

Residues 75-77 and 115-116 each bind substrate; these read MCH and ME. Aspartate 130 is a catalytic residue.

The protein belongs to the MoaC family. As to quaternary structure, homohexamer; trimer of dimers.

It carries out the reaction (8S)-3',8-cyclo-7,8-dihydroguanosine 5'-triphosphate = cyclic pyranopterin phosphate + diphosphate. Its pathway is cofactor biosynthesis; molybdopterin biosynthesis. Functionally, catalyzes the conversion of (8S)-3',8-cyclo-7,8-dihydroguanosine 5'-triphosphate to cyclic pyranopterin monophosphate (cPMP). This chain is Cyclic pyranopterin monophosphate synthase, found in Bacillus thuringiensis subsp. konkukian (strain 97-27).